We begin with the raw amino-acid sequence, 362 residues long: sn-glycerol-3-phosphate import ATP-binding protein UgpC (362 aa).

Residues 4–235 (LTLQSVKKTY…PATVFVASFI (232 aa)) form the ABC transporter domain. 37-44 (GPSGCGKS) contacts ATP.

Belongs to the ABC transporter superfamily. sn-glycerol-3-phosphate importer (TC 3.A.1.1.3) family. In terms of assembly, the complex is composed of two ATP-binding proteins (UgpC), two transmembrane proteins (UgpA and UgpE) and a solute-binding protein (UgpB).

The protein localises to the cell inner membrane. It catalyses the reaction sn-glycerol 3-phosphate(out) + ATP + H2O = sn-glycerol 3-phosphate(in) + ADP + phosphate + H(+). In terms of biological role, part of the ABC transporter complex UgpBAEC involved in sn-glycerol-3-phosphate (G3P) import. Responsible for energy coupling to the transport system. The polypeptide is sn-glycerol-3-phosphate import ATP-binding protein UgpC (Paraburkholderia xenovorans (strain LB400)).